The primary structure comprises 104 residues: Astakine (104 aa).

The first 22 residues, 1 to 22, serve as a signal peptide directing secretion; sequence MKMRGVSVGVLVVAMMSGLAMA. Cystine bridges form between Cys-25/Cys-38, Cys-32/Cys-50, Cys-37/Cys-76, Cys-60/Cys-84, and Cys-78/Cys-91.

The protein belongs to the AVIT (prokineticin) family.

It localises to the secreted. Cytokine directly involved in hematopoiesis. The polypeptide is Astakine (Pacifastacus leniusculus (Signal crayfish)).